The following is a 195-amino-acid chain: Protein GrpE (195 aa).

A compositionally biased stretch (basic and acidic residues) spans 1–20 (MSSKEQKTPDEQVLDQKEAA). Residues 1-40 (MSSKEQKTPDEQVLDQKEAAKGQQADAAPETADVADPRDA) are disordered.

The protein belongs to the GrpE family. As to quaternary structure, homodimer.

The protein localises to the cytoplasm. Functionally, participates actively in the response to hyperosmotic and heat shock by preventing the aggregation of stress-denatured proteins, in association with DnaK and GrpE. It is the nucleotide exchange factor for DnaK and may function as a thermosensor. Unfolded proteins bind initially to DnaJ; upon interaction with the DnaJ-bound protein, DnaK hydrolyzes its bound ATP, resulting in the formation of a stable complex. GrpE releases ADP from DnaK; ATP binding to DnaK triggers the release of the substrate protein, thus completing the reaction cycle. Several rounds of ATP-dependent interactions between DnaJ, DnaK and GrpE are required for fully efficient folding. In Pectobacterium carotovorum subsp. carotovorum (strain PC1), this protein is Protein GrpE.